A 271-amino-acid chain; its full sequence is Phosphate import ATP-binding protein PstB 1 (271 aa).

An ABC transporter domain is found at 25 to 266 (LTVEHLNLYY…PTQRRTEDYI (242 aa)). 57-64 (GPSGCGKS) is a binding site for ATP.

This sequence belongs to the ABC transporter superfamily. Phosphate importer (TC 3.A.1.7) family. The complex is composed of two ATP-binding proteins (PstB), two transmembrane proteins (PstC and PstA) and a solute-binding protein (PstS).

The protein localises to the cell inner membrane. The catalysed reaction is phosphate(out) + ATP + H2O = ADP + 2 phosphate(in) + H(+). Functionally, part of the ABC transporter complex PstSACB involved in phosphate import. Responsible for energy coupling to the transport system. The chain is Phosphate import ATP-binding protein PstB 1 from Pectobacterium atrosepticum (strain SCRI 1043 / ATCC BAA-672) (Erwinia carotovora subsp. atroseptica).